Reading from the N-terminus, the 331-residue chain is Biotin synthase (331 aa).

The region spanning P52–R277 is the Radical SAM core domain. Residues C67, C71, and C74 each coordinate [4Fe-4S] cluster. The [2Fe-2S] cluster site is built by C110, C202, and R272.

This sequence belongs to the radical SAM superfamily. Biotin synthase family. Homodimer. [4Fe-4S] cluster serves as cofactor. Requires [2Fe-2S] cluster as cofactor.

The catalysed reaction is (4R,5S)-dethiobiotin + (sulfur carrier)-SH + 2 reduced [2Fe-2S]-[ferredoxin] + 2 S-adenosyl-L-methionine = (sulfur carrier)-H + biotin + 2 5'-deoxyadenosine + 2 L-methionine + 2 oxidized [2Fe-2S]-[ferredoxin]. It functions in the pathway cofactor biosynthesis; biotin biosynthesis; biotin from 7,8-diaminononanoate: step 2/2. Its function is as follows. Catalyzes the conversion of dethiobiotin (DTB) to biotin by the insertion of a sulfur atom into dethiobiotin via a radical-based mechanism. The sequence is that of Biotin synthase from Salinispora arenicola (strain CNS-205).